The following is a 333-amino-acid chain: Ribosomal protein L11 methyltransferase (333 aa).

Positions 181, 202, 224, and 268 each coordinate S-adenosyl-L-methionine.

This sequence belongs to the methyltransferase superfamily. PrmA family.

Its subcellular location is the cytoplasm. The catalysed reaction is L-lysyl-[protein] + 3 S-adenosyl-L-methionine = N(6),N(6),N(6)-trimethyl-L-lysyl-[protein] + 3 S-adenosyl-L-homocysteine + 3 H(+). Functionally, methylates ribosomal protein L11. The protein is Ribosomal protein L11 methyltransferase of Helicobacter pylori (strain ATCC 700392 / 26695) (Campylobacter pylori).